The sequence spans 425 residues: G protein-activated inward rectifier potassium channel 2 (425 aa).

The Cytoplasmic portion of the chain corresponds to 1 to 91 (MTMAKLTESM…ILTTLVDLKW (91 aa)). 2 positions are modified to phosphoserine: Ser18 and Ser25. Residues 92 to 116 (RFNLLIFVMVYTVTWLFFGMIWWLI) form a helical membrane-spanning segment. Residues 117-140 (AYIRGDMDHVEDPSWTPCVTNLNG) are Extracellular-facing. An intramembrane region (helical; Pore-forming) is located at residues 141-152 (FVSAFLFSIETE). Positions 153–159 (TTIGYGY) form an intramembrane region, pore-forming. The short motif at 154–159 (TIGYGY) is the Selectivity filter element. Residues 160-168 (RVITDKCPE) lie on the Extracellular side of the membrane. A helical transmembrane segment spans residues 169–190 (GIILLLIQSVLGSIVNAFMVGC). The Cytoplasmic segment spans residues 191 to 425 (MFVKISQPKK…VANLENESKV (235 aa)). Residues 392 to 425 (NQHAELETEEEEKNPEEQTERNGDVANLENESKV) are disordered. The PDZ-binding signature appears at 422–425 (ESKV).

Belongs to the inward rectifier-type potassium channel (TC 1.A.2.1) family. KCNJ6 subfamily. Associates with KCNJ3/GIRK1 or KCNJ5/GRIK4 to form a G-protein-activated heteromultimer pore-forming unit. The resulting inward current is much larger. Interacts (via PDZ-binding motif) with SNX27 (via PDZ domain); the interaction is required when endocytosed to prevent degradation in lysosomes and promote recycling to the plasma membrane. Expressed in insulin-secreting cells and brain.

It is found in the membrane. It catalyses the reaction K(+)(in) = K(+)(out). Activated by phosphatidylinositol 4,5 biphosphate (PtdIns(4,5)P2). Inward rectifier potassium channels are characterized by a greater tendency to allow potassium to flow into the cell rather than out of it. Their voltage dependence is regulated by the concentration of extracellular potassium; as external potassium is raised, the voltage range of the channel opening shifts to more positive voltages. The inward rectification is mainly due to the blockage of outward current by internal magnesium. This potassium channel may be involved in the regulation of insulin secretion by glucose and/or neurotransmitters acting through G-protein-coupled receptors. The chain is G protein-activated inward rectifier potassium channel 2 (KCNJ6) from Mesocricetus auratus (Golden hamster).